The chain runs to 195 residues: Dehydrin DHN1 (195 aa).

A disordered region spans residues 1 to 195 (MAEYGDQYGR…IKEKLPGGHH (195 aa)). Low complexity predominate over residues 37 to 48 (YGTTGTTVGYGT). A compositionally biased stretch (polar residues) spans 50–64 (QCVTTVTTGAQKTDQ). Positions 65–88 (YGTPGTTGAYGTDQYGTTGTTGEY) are enriched in low complexity. Basic and acidic residues-rich tracts occupy residues 136-153 (KEKIKEKLPGGGHGDDQT) and 173-195 (SPEHEEKKGIMDKIKEKLPGGHH).

The protein belongs to the plant dehydrin family. Phosphorylated in vitro by CK2. In terms of tissue distribution, expressed in roots and leaves.

The protein resides in the cytoplasm. It localises to the nucleus. In Avicennia marina (Grey mangrove), this protein is Dehydrin DHN1.